The primary structure comprises 667 residues: Probable potassium transport system protein Kup (667 aa).

Helical transmembrane passes span 16–36, 58–78, 101–121, 146–166, 167–187, 221–241, 253–273, 294–314, 343–363, 373–393, 399–419, and 431–451; these read GFII…LYTM, VSLI…LIAL, WLII…ALTP, TNVI…QRFG, TGVI…VLGI, IFIL…YSDL, WPFV…WILA, VYLV…LISG, LYIP…VLYF, YGLA…YYLI, PLLA…FFLA, and VVVL…GTVI.

This sequence belongs to the HAK/KUP transporter (TC 2.A.72) family.

The protein localises to the cell membrane. It carries out the reaction K(+)(in) + H(+)(in) = K(+)(out) + H(+)(out). Transport of potassium into the cell. Likely operates as a K(+):H(+) symporter. The chain is Probable potassium transport system protein Kup from Streptococcus equi subsp. zooepidemicus (strain H70).